Reading from the N-terminus, the 169-residue chain is Putative tRNA (cytidine(34)-2'-O)-methyltransferase (169 aa).

Residues Val79, Gly104, Ile125, and Ser134 each contribute to the S-adenosyl-L-methionine site.

Belongs to the class IV-like SAM-binding methyltransferase superfamily. RNA methyltransferase TrmH family. TrmL subfamily.

The protein localises to the cytoplasm. The catalysed reaction is cytidine(34) in tRNA + S-adenosyl-L-methionine = 2'-O-methylcytidine(34) in tRNA + S-adenosyl-L-homocysteine + H(+). It carries out the reaction 5-carboxymethylaminomethyluridine(34) in tRNA(Leu) + S-adenosyl-L-methionine = 5-carboxymethylaminomethyl-2'-O-methyluridine(34) in tRNA(Leu) + S-adenosyl-L-homocysteine + H(+). Its function is as follows. Could methylate the ribose at the nucleotide 34 wobble position in tRNA. The polypeptide is Putative tRNA (cytidine(34)-2'-O)-methyltransferase (Lactococcus lactis subsp. cremoris (strain MG1363)).